The following is an 833-amino-acid chain: Leucine--tRNA ligase (833 aa).

Residues 41 to 52 (PYPSGAGLHVGH) carry the 'HIGH' region motif. The 'KMSKS' region signature appears at 610–614 (KMSKS). Residue K613 coordinates ATP.

It belongs to the class-I aminoacyl-tRNA synthetase family.

It localises to the cytoplasm. It carries out the reaction tRNA(Leu) + L-leucine + ATP = L-leucyl-tRNA(Leu) + AMP + diphosphate. The chain is Leucine--tRNA ligase from Streptococcus pneumoniae serotype 4 (strain ATCC BAA-334 / TIGR4).